Consider the following 296-residue polypeptide: Haloalkane dehalogenase (296 aa).

In terms of domain architecture, AB hydrolase-1 spans 31–155 (PILFQHGNPT…QDRDLFQAFR (125 aa)). The active-site Nucleophile is Asp108. Glu132 functions as the Proton donor in the catalytic mechanism. The Proton acceptor role is filled by His272.

It belongs to the haloalkane dehalogenase family. Type 2 subfamily. As to quaternary structure, monomer.

Its subcellular location is the periplasm. It catalyses the reaction 1-haloalkane + H2O = a halide anion + a primary alcohol + H(+). The catalysed reaction is (3R,6R)-1,3,4,6-tetrachlorocyclohexa-1,4-diene + 2 H2O = 2,5-dichlorocyclohexa-2,5-dien-1,4-diol + 2 chloride + 2 H(+). The protein operates within xenobiotic degradation; gamma-hexachlorocyclohexane degradation. Catalyzes hydrolytic cleavage of carbon-halogen bonds in halogenated aliphatic compounds, leading to the formation of the corresponding primary alcohols, halide ions and protons. Is involved in the degradation of the important environmental pollutant gamma-hexachlorocyclohexane (gamma-HCH or lindane) as it also catalyzes conversion of 1,3,4,6-tetrachloro-1,4-cyclohexadiene (1,4-TCDN) to 2,5-dichloro-2,5-cyclohexadiene-1,4-diol (2,5-DDOL) via the intermediate 2,4,5-trichloro-2,5-cyclohexadiene-1-ol (2,4,5-DNOL). This chain is Haloalkane dehalogenase, found in Sphingobium indicum (strain DSM 16412 / CCM 7286 / MTCC 6364 / B90A).